Reading from the N-terminus, the 440-residue chain is tRNA-2-methylthio-N(6)-dimethylallyladenosine synthase (440 aa).

The 117-residue stretch at 2–118 (PKYYIITYGC…LPKILESLDG (117 aa)) folds into the MTTase N-terminal domain. Residues Cys11, Cys47, Cys81, Cys155, Cys159, and Cys162 each coordinate [4Fe-4S] cluster. The 230-residue stretch at 141 to 370 (RENKFQAWIP…ENLQRKIIYE (230 aa)) folds into the Radical SAM core domain. In terms of domain architecture, TRAM spans 373 to 436 (LSRVGKEEIV…LWSLKGEVIR (64 aa)).

The protein belongs to the methylthiotransferase family. MiaB subfamily. Monomer. [4Fe-4S] cluster is required as a cofactor.

Its subcellular location is the cytoplasm. The catalysed reaction is N(6)-dimethylallyladenosine(37) in tRNA + (sulfur carrier)-SH + AH2 + 2 S-adenosyl-L-methionine = 2-methylsulfanyl-N(6)-dimethylallyladenosine(37) in tRNA + (sulfur carrier)-H + 5'-deoxyadenosine + L-methionine + A + S-adenosyl-L-homocysteine + 2 H(+). Catalyzes the methylthiolation of N6-(dimethylallyl)adenosine (i(6)A), leading to the formation of 2-methylthio-N6-(dimethylallyl)adenosine (ms(2)i(6)A) at position 37 in tRNAs that read codons beginning with uridine. The polypeptide is tRNA-2-methylthio-N(6)-dimethylallyladenosine synthase (Dictyoglomus thermophilum (strain ATCC 35947 / DSM 3960 / H-6-12)).